An 89-amino-acid chain; its full sequence is MLYMKGTPKMPQCGFSARAVQCIEACGVDFAYVDILANPDIRQVLPQFSDWPTFPQLYVKGELIGGSDIIAEMFQQGELEPMLRDAVAA.

Residues 1-89 enclose the Glutaredoxin domain; sequence MLYMKGTPKM…EPMLRDAVAA (89 aa). Lysine 5 is a binding site for glutathione. Cysteine 13 contacts [2Fe-2S] cluster. Glutathione is bound by residues arginine 42, phenylalanine 54, and 67–68; that span reads SD.

Belongs to the glutaredoxin family. Monothiol subfamily.

This Legionella pneumophila subsp. pneumophila (strain Philadelphia 1 / ATCC 33152 / DSM 7513) protein is Probable monothiol glutaredoxin GrlA (grlA).